Here is a 277-residue protein sequence, read N- to C-terminus: Small ribosomal subunit protein uS2 (277 aa).

Residues 1–78 (MSENDEGTDA…PADEEPVLDE (78 aa)) are disordered.

Belongs to the universal ribosomal protein uS2 family.

In Natronomonas pharaonis (strain ATCC 35678 / DSM 2160 / CIP 103997 / JCM 8858 / NBRC 14720 / NCIMB 2260 / Gabara) (Halobacterium pharaonis), this protein is Small ribosomal subunit protein uS2.